The following is a 666-amino-acid chain: ESX-1 secretion-associated protein EspI (666 aa).

Over residues 1–15 (MAADYDKLFRPHEGM) the composition is skewed to basic and acidic residues. The segment at 1–378 (MAADYDKLFR…ATKPPKVVSQ (378 aa)) is disordered. Residues 22-31 (AAQPFFDPSA) show a composition bias toward low complexity. Composition is skewed to pro residues over residues 64-80 (APPPPPPPPPPPPPTPM), 87-144 (PPSP…PAPT), and 188-205 (PAPPWAKMPIGEPPPAPS). A compositionally biased stretch (basic residues) spans 222–231 (HSRRARRGHR). Over residues 284–297 (PTRPAPTEPPPSPS) the composition is skewed to pro residues. Basic residues predominate over residues 357–371 (PKVKKVKPQKPKATK). Residue 424-431 (LKGGAGKT) participates in ATP binding.

Required to repress ESX-1-mediated secretion under low ATP conditions. This function requires the ATP-binding motif. This is ESX-1 secretion-associated protein EspI from Mycobacterium tuberculosis (strain CDC 1551 / Oshkosh).